Consider the following 559-residue polypeptide: Pentatricopeptide repeat-containing protein At1g08610 (559 aa).

13 PPR repeats span residues D103–P137, H138–P172, D173–P207, D208–P242, F243–P277, D278–L312, N313–P347, T348–P382, D383–P417, G418–P452, D453–I487, R488–P522, and D523–K557.

This sequence belongs to the PPR family. P subfamily.

This is Pentatricopeptide repeat-containing protein At1g08610 from Arabidopsis thaliana (Mouse-ear cress).